Here is a 331-residue protein sequence, read N- to C-terminus: MAKTMMQDRLINPLEGAADAPDANIRPALLAEYIGQPVVREQMEVFIQAARARDEALDHTLIFGPPGLGKTTLANIIAREMGGNLRSTSGPVLERAGDLAAMLTNLEAGDVLFIDEIHRLSPVIEEILYPAMEDFQLDIMIGEGPAARSIKLDLPPFTLVAATTRAGLLTSPLRDRFGIVQRLEFYNIADLTTIVSRAARLMRVPMSEDGAVEIARRARGTPRIANRLLRRVRDYAQVRGDGSINGAIAGSALDMLAVDRRGLDHLDRRYIEILHERFDGGPAGVEAVAAAMAEDRGTLEDVIEPYLIQQGYVLRTARGRVLTQMAIDQML.

Positions 1 to 186 are large ATPase domain (RuvB-L); the sequence is MAKTMMQDRL…FGIVQRLEFY (186 aa). ATP is bound by residues Ile25, Arg26, Gly67, Lys70, Thr71, Thr72, 133–135, Arg176, Tyr186, and Arg223; that span reads EDF. Thr71 serves as a coordination point for Mg(2+). Residues 187–257 are small ATPAse domain (RuvB-S); that stretch reads NIADLTTIVS…IAGSALDMLA (71 aa). Residues 260-331 form a head domain (RuvB-H) region; the sequence is RRGLDHLDRR…LTQMAIDQML (72 aa). Residues Arg296, Arg315, and Arg320 each contribute to the DNA site.

It belongs to the RuvB family. Homohexamer. Forms an RuvA(8)-RuvB(12)-Holliday junction (HJ) complex. HJ DNA is sandwiched between 2 RuvA tetramers; dsDNA enters through RuvA and exits via RuvB. An RuvB hexamer assembles on each DNA strand where it exits the tetramer. Each RuvB hexamer is contacted by two RuvA subunits (via domain III) on 2 adjacent RuvB subunits; this complex drives branch migration. In the full resolvosome a probable DNA-RuvA(4)-RuvB(12)-RuvC(2) complex forms which resolves the HJ.

The protein localises to the cytoplasm. The enzyme catalyses ATP + H2O = ADP + phosphate + H(+). The RuvA-RuvB-RuvC complex processes Holliday junction (HJ) DNA during genetic recombination and DNA repair, while the RuvA-RuvB complex plays an important role in the rescue of blocked DNA replication forks via replication fork reversal (RFR). RuvA specifically binds to HJ cruciform DNA, conferring on it an open structure. The RuvB hexamer acts as an ATP-dependent pump, pulling dsDNA into and through the RuvAB complex. RuvB forms 2 homohexamers on either side of HJ DNA bound by 1 or 2 RuvA tetramers; 4 subunits per hexamer contact DNA at a time. Coordinated motions by a converter formed by DNA-disengaged RuvB subunits stimulates ATP hydrolysis and nucleotide exchange. Immobilization of the converter enables RuvB to convert the ATP-contained energy into a lever motion, pulling 2 nucleotides of DNA out of the RuvA tetramer per ATP hydrolyzed, thus driving DNA branch migration. The RuvB motors rotate together with the DNA substrate, which together with the progressing nucleotide cycle form the mechanistic basis for DNA recombination by continuous HJ branch migration. Branch migration allows RuvC to scan DNA until it finds its consensus sequence, where it cleaves and resolves cruciform DNA. The polypeptide is Holliday junction branch migration complex subunit RuvB (Psychrobacter cryohalolentis (strain ATCC BAA-1226 / DSM 17306 / VKM B-2378 / K5)).